Consider the following 132-residue polypeptide: Small ribosomal subunit protein uS8 (132 aa).

The protein belongs to the universal ribosomal protein uS8 family. In terms of assembly, part of the 30S ribosomal subunit. Contacts proteins S5 and S12.

Functionally, one of the primary rRNA binding proteins, it binds directly to 16S rRNA central domain where it helps coordinate assembly of the platform of the 30S subunit. This chain is Small ribosomal subunit protein uS8, found in Heliobacterium modesticaldum (strain ATCC 51547 / Ice1).